The sequence spans 234 residues: 3-dehydroquinate dehydratase (234 aa).

3-dehydroquinate-binding positions include 33–35 and arginine 68; that span reads EWR. Histidine 124 functions as the Proton donor/acceptor in the catalytic mechanism. Residue lysine 151 is the Schiff-base intermediate with substrate of the active site. 3 residues coordinate 3-dehydroquinate: arginine 193, serine 214, and glutamine 218.

It belongs to the type-I 3-dehydroquinase family. Homodimer.

The catalysed reaction is 3-dehydroquinate = 3-dehydroshikimate + H2O. Its pathway is metabolic intermediate biosynthesis; chorismate biosynthesis; chorismate from D-erythrose 4-phosphate and phosphoenolpyruvate: step 3/7. Involved in the third step of the chorismate pathway, which leads to the biosynthesis of aromatic amino acids. Catalyzes the cis-dehydration of 3-dehydroquinate (DHQ) and introduces the first double bond of the aromatic ring to yield 3-dehydroshikimate. This chain is 3-dehydroquinate dehydratase, found in Syntrophobacter fumaroxidans (strain DSM 10017 / MPOB).